The sequence spans 225 residues: 2-amino-5-formylamino-6-ribosylaminopyrimidin-4(3H)-one 5'-monophosphate deformylase (225 aa).

4 residues coordinate Fe cation: E28, H30, D39, and H107.

Belongs to the creatininase superfamily. FAPy deformylase family. In terms of assembly, homodimer. Fe(2+) is required as a cofactor. Requires Zn(2+) as cofactor.

It catalyses the reaction 2-amino-5-formylamino-6-(5-phospho-D-ribosylamino)pyrimidin-4(3H)-one + H2O = 2,5-diamino-6-(1-D-ribosylamino)pyrimidin-4(3H)-one 5'-phosphate + formate + H(+). Its pathway is cofactor biosynthesis; coenzyme F420 biosynthesis. The protein operates within cofactor biosynthesis; riboflavin biosynthesis. Its function is as follows. Catalyzes the hydrolysis of the formamide of 2-amino-5-formylamino-6-ribosylamino-4(3H)-pyrimidinone 5'-monophosphate (FAPy) to form 2,5-diamino-6-ribosylamino-4(3H)-pyrimidinone 5'-phosphate (APy). This Methanocaldococcus fervens (strain DSM 4213 / JCM 15782 / AG86) (Methanococcus fervens) protein is 2-amino-5-formylamino-6-ribosylaminopyrimidin-4(3H)-one 5'-monophosphate deformylase.